A 382-amino-acid polypeptide reads, in one-letter code: Na(+)/H(+) antiporter NhaA (382 aa).

A run of 11 helical transmembrane segments spans residues 14-34 (AGGI…NSSL), 49-69 (MSVS…LIGL), 87-107 (IFPA…YVAF), 117-137 (GWAI…ALLG), 146-166 (VFLL…IAFF), 171-191 (LSVL…LLNA), 205-225 (FILW…GVVL), 252-272 (VAFA…LEGV), 285-305 (VALG…YLAV), 321-341 (IFAV…ISSL), and 356-376 (LGIL…LSIS).

Belongs to the NhaA Na(+)/H(+) (TC 2.A.33) antiporter family.

It localises to the cell inner membrane. It carries out the reaction Na(+)(in) + 2 H(+)(out) = Na(+)(out) + 2 H(+)(in). In terms of biological role, na(+)/H(+) antiporter that extrudes sodium in exchange for external protons. This chain is Na(+)/H(+) antiporter NhaA, found in Aliivibrio fischeri (strain ATCC 700601 / ES114) (Vibrio fischeri).